The sequence spans 577 residues: Lysine-specific demethylase 7B (577 aa).

The segment at 5-56 (QLYCVCRQPYDVSRFMIECDICKDWFHGSCVEVEEHYAVDIDVYHCPNCDVH) adopts a PHD-type zinc-finger fold. A JmjC domain is found at 198–354 (FSDTKMAELV…MQLRCYEMER (157 aa)). Thr-247 contributes to the substrate binding site. Fe cation is bound by residues His-250 and Asp-252. Residue Lys-267 coordinates substrate. His-322 contacts Fe cation. The disordered stretch occupies residues 460-513 (CPSTRSAHERGSHARKTARRLRGHHHHHHRHHHHHHHHHHHNHQHSDGPKAPSH). The span at 472 to 502 (HARKTARRLRGHHHHHHRHHHHHHHHHHHNH) shows a compositional bias: basic residues.

This sequence belongs to the JHDM1 histone demethylase family. JHDM1D subfamily. It depends on Fe(2+) as a cofactor. Predominantly expressed in brain.

It localises to the nucleus. Histone demethylase required for brain development. Specifically demethylates dimethylated 'Lys-9' and 'Lys-27' (H3K9me2 and H3K27me2, respectively) of histone H3 and monomethylated histone H4 'Lys-20' residue (H4K20Me1), thereby playing a central role in histone code. The sequence is that of Lysine-specific demethylase 7B (jhdm1db) from Danio rerio (Zebrafish).